The chain runs to 199 residues: Nucleoside triphosphate pyrophosphatase (199 aa).

The active-site Proton acceptor is Asp-72.

The protein belongs to the Maf family. Requires a divalent metal cation as cofactor.

The protein localises to the cytoplasm. The enzyme catalyses a ribonucleoside 5'-triphosphate + H2O = a ribonucleoside 5'-phosphate + diphosphate + H(+). It catalyses the reaction a 2'-deoxyribonucleoside 5'-triphosphate + H2O = a 2'-deoxyribonucleoside 5'-phosphate + diphosphate + H(+). In terms of biological role, nucleoside triphosphate pyrophosphatase. May have a dual role in cell division arrest and in preventing the incorporation of modified nucleotides into cellular nucleic acids. The protein is Nucleoside triphosphate pyrophosphatase of Synechococcus elongatus (strain ATCC 33912 / PCC 7942 / FACHB-805) (Anacystis nidulans R2).